Consider the following 155-residue polypeptide: Large ribosomal subunit protein eL24 (155 aa).

The span at 98 to 129 shows a compositional bias: basic and acidic residues; that stretch reads PEVRKAKRDDKAKADKEKKKADKAARKAEKAK. The disordered stretch occupies residues 98–155; the sequence is PEVRKAKRDDKAKADKEKKKADKAARKAEKAKLAAAQGSKVSKQQAKGAFQKVAATSR.

This sequence belongs to the eukaryotic ribosomal protein eL24 family.

The sequence is that of Large ribosomal subunit protein eL24 (RPL24) from Candida glabrata (strain ATCC 2001 / BCRC 20586 / JCM 3761 / NBRC 0622 / NRRL Y-65 / CBS 138) (Yeast).